The chain runs to 220 residues: Uracil-DNA glycosylase (220 aa).

D60 (proton acceptor) is an active-site residue.

The protein belongs to the uracil-DNA glycosylase (UDG) superfamily. UNG family.

Its subcellular location is the cytoplasm. It catalyses the reaction Hydrolyzes single-stranded DNA or mismatched double-stranded DNA and polynucleotides, releasing free uracil.. Functionally, excises uracil residues from the DNA which can arise as a result of misincorporation of dUMP residues by DNA polymerase or due to deamination of cytosine. The polypeptide is Uracil-DNA glycosylase (Francisella tularensis subsp. novicida (strain U112)).